We begin with the raw amino-acid sequence, 1003 residues long: Calcium-transporting ATPase sarcoplasmic/endoplasmic reticulum type (1003 aa).

At 1–59 (MEDAHAKKWEEVVDYFGVDPERGLALEQVKKNQEKYGPNELPAEEGKSLLTLILEQFDD) the chain is on the cytoplasmic side. The chain crosses the membrane as a helical span at residues 60–78 (LLVKILLLAAIISLVLALF). The Extracellular segment spans residues 79–89 (EEHDDEAEQLT). A helical membrane pass occupies residues 90 to 110 (AYVEPFVILLILIANAVVGVW). Topologically, residues 111–262 (QEKNAESAIE…QQKLDEFGEQ (152 aa)) are cytoplasmic. The helical transmembrane segment at 263–282 (LSKVISVICVAVWAINIGHF) threads the bilayer. Over 283–300 (NDPAHGGSWIKGAIYYFK) the chain is Extracellular. Residues 301–318 (IAVALAVAAIPEGLPAVI) form a helical membrane-spanning segment. Over 319–775 (TTCLALGTRR…RYLISSNIGE (457 aa)) the chain is Cytoplasmic. Catalysis depends on Asp354, which acts as the 4-aspartylphosphate intermediate. Residue Lys519 coordinates ATP. A helical membrane pass occupies residues 776–799 (VVSIFLTAALGLPEALIPVQLLWV). Residues 800–840 (NLVTDGLPATALGFNPPDLDIMNKPPRRADEGLITGWLFFR) lie on the Extracellular side of the membrane. A helical transmembrane segment spans residues 841–863 (YMAIGTYVGAATVGAAAHWFMMS). Residues 864-898 (PTGPGLNFYQLSHHLQCTPENEYFEGIDCEIFSDP) are Cytoplasmic-facing. Residues 899 to 917 (HPMTMALSVLVTIEMLNAI) traverse the membrane as a helical segment. The Extracellular segment spans residues 918-934 (NSLSENQSLLVMPPWSN). The helical transmembrane segment at 935 to 954 (IWLISAICLSMTLHFVILYV) threads the bilayer. The Cytoplasmic segment spans residues 955–1003 (EILSTVFQICPLTLTEWIVVLKISFPVLLLDEVLKFVARKYTDEFSFIK).

Belongs to the cation transport ATPase (P-type) (TC 3.A.3) family.

Its subcellular location is the sarcoplasmic reticulum membrane. The catalysed reaction is Ca(2+)(in) + ATP + H2O = Ca(2+)(out) + ADP + phosphate + H(+). This magnesium-dependent enzyme catalyzes the hydrolysis of ATP coupled with the transport of the calcium. This Artemia franciscana (Brine shrimp) protein is Calcium-transporting ATPase sarcoplasmic/endoplasmic reticulum type.